Here is a 275-residue protein sequence, read N- to C-terminus: Pantothenate synthetase (275 aa).

Position 26 to 33 (methionine 26 to histidine 33) interacts with ATP. The Proton donor role is filled by histidine 33. Glutamine 57 is a binding site for (R)-pantoate. Glutamine 57 provides a ligand contact to beta-alanine. An ATP-binding site is contributed by glycine 143–aspartate 146. Glutamine 149 contacts (R)-pantoate. ATP-binding positions include alanine 172 and arginine 180–arginine 183.

The protein belongs to the pantothenate synthetase family. In terms of assembly, homodimer.

Its subcellular location is the cytoplasm. The enzyme catalyses (R)-pantoate + beta-alanine + ATP = (R)-pantothenate + AMP + diphosphate + H(+). The protein operates within cofactor biosynthesis; (R)-pantothenate biosynthesis; (R)-pantothenate from (R)-pantoate and beta-alanine: step 1/1. In terms of biological role, catalyzes the condensation of pantoate with beta-alanine in an ATP-dependent reaction via a pantoyl-adenylate intermediate. This is Pantothenate synthetase from Gluconobacter oxydans (strain 621H) (Gluconobacter suboxydans).